A 240-amino-acid polypeptide reads, in one-letter code: uncharacterized protein (240 aa).

The signal sequence occupies residues 1 to 30 (MNKSGMSLIITMLLLIGTAIVIGAAYYAWS).

This is an uncharacterized protein from Methanocaldococcus jannaschii (strain ATCC 43067 / DSM 2661 / JAL-1 / JCM 10045 / NBRC 100440) (Methanococcus jannaschii).